The following is a 334-amino-acid chain: Beta-1,3-N-acetylglucosaminyltransferase radical fringe (334 aa).

Topologically, residues 1–6 (MSRVRR) are cytoplasmic. A helical; Signal-anchor for type II membrane protein transmembrane segment spans residues 7-29 (VLCRACLALAAVLAVLLLLPLPL). At 30 to 334 (PLPLPLPRAP…MKNRGKEAFQ (305 aa)) the chain is on the lumenal side. Substrate is bound at residue Arg77. Asn116 is a glycosylation site (N-linked (GlcNAc...) asparagine). 2 disulfides stabilise this stretch: Cys117–Cys128 and Cys146–Cys210. A substrate-binding site is contributed by Asp150. Asp151 provides a ligand contact to Mn(2+). Residue Asp240 is part of the active site. His264 serves as a coordination point for Mn(2+). Residues Cys314 and Cys323 are joined by a disulfide bond.

Belongs to the glycosyltransferase 31 family. Requires Mn(2+) as cofactor. In terms of tissue distribution, most abundantly expressed in adult brain. Expressed in most neurons of the brain but not in glial cells. Also detected to a lower extent in adult lung and kidney.

The protein localises to the golgi apparatus membrane. The enzyme catalyses 3-O-(alpha-L-fucosyl)-L-threonyl-[EGF-like domain protein] + UDP-N-acetyl-alpha-D-glucosamine = 3-O-(N-acetyl-beta-D-glucosaminyl-(1-&gt;3)-alpha-L-fucosyl)-L-threonyl-[EGF-like domain protein] + UDP + H(+). It carries out the reaction 3-O-(alpha-L-fucosyl)-L-seryl-[EGF-like domain protein] + UDP-N-acetyl-alpha-D-glucosamine = 3-O-(N-acetyl-beta-D-glucosaminyl-(1-&gt;3)-alpha-L-fucosyl)-L-seryl-[EGF-like domain protein] + UDP + H(+). In terms of biological role, glycosyltransferase that initiates the elongation of O-linked fucose residues attached to EGF-like repeats in the extracellular domain of Notch molecules. Modulates NOTCH1 activity by modifying O-fucose residues at specific EGF-like domains resulting in enhancement of NOTCH1 activation by DLL1 and JAG1. Inhibits Notch signaling in postmitotic neurons of the brain. It may play a role in adult brain and in neurogenesis. It may play a role in limb development. The sequence is that of Beta-1,3-N-acetylglucosaminyltransferase radical fringe from Rattus norvegicus (Rat).